Here is a 141-residue protein sequence, read N- to C-terminus: Nucleoside diphosphate kinase (141 aa).

The ATP site is built by lysine 11, phenylalanine 59, arginine 87, threonine 93, arginine 104, and asparagine 114. Residue histidine 117 is the Pros-phosphohistidine intermediate of the active site.

Belongs to the NDK family. In terms of assembly, homotetramer. Mg(2+) is required as a cofactor.

The protein resides in the cytoplasm. The enzyme catalyses a 2'-deoxyribonucleoside 5'-diphosphate + ATP = a 2'-deoxyribonucleoside 5'-triphosphate + ADP. It carries out the reaction a ribonucleoside 5'-diphosphate + ATP = a ribonucleoside 5'-triphosphate + ADP. Major role in the synthesis of nucleoside triphosphates other than ATP. The ATP gamma phosphate is transferred to the NDP beta phosphate via a ping-pong mechanism, using a phosphorylated active-site intermediate. This Pseudomonas fluorescens (strain ATCC BAA-477 / NRRL B-23932 / Pf-5) protein is Nucleoside diphosphate kinase.